A 321-amino-acid chain; its full sequence is uncharacterized protein (321 aa).

It belongs to the NAD(P)-dependent epimerase/dehydratase family.

This is an uncharacterized protein from Staphylococcus aureus (strain COL).